A 537-amino-acid polypeptide reads, in one-letter code: Chaperonin GroEL (537 aa).

Residues 29–32, 86–90, G413, 477–479, and D493 contribute to the ATP site; these read TLGP, DGTTT, and NAA.

This sequence belongs to the chaperonin (HSP60) family. As to quaternary structure, forms a cylinder of 14 subunits composed of two heptameric rings stacked back-to-back. Interacts with the co-chaperonin GroES.

Its subcellular location is the cytoplasm. The enzyme catalyses ATP + H2O + a folded polypeptide = ADP + phosphate + an unfolded polypeptide.. Its function is as follows. Together with its co-chaperonin GroES, plays an essential role in assisting protein folding. The GroEL-GroES system forms a nano-cage that allows encapsulation of the non-native substrate proteins and provides a physical environment optimized to promote and accelerate protein folding. In Bifidobacterium animalis subsp. lactis (strain AD011), this protein is Chaperonin GroEL.